The primary structure comprises 465 residues: 3-isopropylmalate dehydratase large subunit (465 aa).

Residues Cys-347, Cys-407, and Cys-410 each contribute to the [4Fe-4S] cluster site.

Belongs to the aconitase/IPM isomerase family. LeuC type 1 subfamily. In terms of assembly, heterodimer of LeuC and LeuD. It depends on [4Fe-4S] cluster as a cofactor.

It catalyses the reaction (2R,3S)-3-isopropylmalate = (2S)-2-isopropylmalate. It functions in the pathway amino-acid biosynthesis; L-leucine biosynthesis; L-leucine from 3-methyl-2-oxobutanoate: step 2/4. In terms of biological role, catalyzes the isomerization between 2-isopropylmalate and 3-isopropylmalate, via the formation of 2-isopropylmaleate. This is 3-isopropylmalate dehydratase large subunit from Buchnera aphidicola subsp. Pemphigus spyrothecae.